Reading from the N-terminus, the 485-residue chain is Delta(14)-sterol reductase (485 aa).

5 consecutive transmembrane segments (helical) span residues 18–38, 77–97, 131–151, 155–175, and 319–339; these read FFGPPGAFAISFLLPVLVYVF, GLVSWEASAATAGYILLSLIL, LAILAAGTAAQGAEFPVWTFI, FIQILTANTIFSYAVATFVYV, and SLGPVGLAVMLSLIGLGFYIF. Residues Lys346, Arg350, Leu373, Trp378, and 385–386 each bind NADP(+); that span reads NY. A helical transmembrane segment spans residues 431-451; that stretch reads AKGWGMLITYFYILYFAILLI. NADP(+) is bound by residues Asp457, 461 to 465, and Tyr472; that span reads CHRKY.

This sequence belongs to the ERG4/ERG24 family.

The protein resides in the membrane. The enzyme catalyses 4,4-dimethyl-5alpha-cholesta-8,24-dien-3beta-ol + NADP(+) = 4,4-dimethyl-5alpha-cholesta-8,14,24-trien-3beta-ol + NADPH + H(+). It participates in steroid biosynthesis; zymosterol biosynthesis; zymosterol from lanosterol: step 2/6. Functionally, reduces the C14=C15 double bond of 4,4-dimethyl-cholesta-8,14,24-trienol to produce 4,4-dimethyl-cholesta-8,24-dienol. The protein is Delta(14)-sterol reductase of Fusarium vanettenii (Neocosmospora pisi).